The chain runs to 70 residues: MPTVQTPSQRRANTQFQKNITRRVKTNSKERYVAKHPPTKIPRNIAMFFILLMSGGIILGILRFLLTFFS.

A compositionally biased stretch (polar residues) spans 1 to 19 (MPTVQTPSQRRANTQFQKN). The segment at 1 to 20 (MPTVQTPSQRRANTQFQKNI) is disordered. Residues 45-65 (IAMFFILLMSGGIILGILRFL) traverse the membrane as a helical segment.

This sequence belongs to the RAMP4 family.

Its subcellular location is the membrane. The protein resides in the endoplasmic reticulum membrane. In terms of biological role, interacts with target proteins during their translocation into the lumen of the endoplasmic reticulum. Protects unfolded target proteins against degradation during ER stress. May facilitate glycosylation of target proteins after termination of ER stress. This chain is Protein tam14 (tam14), found in Schizosaccharomyces pombe (strain 972 / ATCC 24843) (Fission yeast).